Consider the following 194-residue polypeptide: Imidazoleglycerol-phosphate dehydratase (194 aa).

Belongs to the imidazoleglycerol-phosphate dehydratase family.

It localises to the cytoplasm. It catalyses the reaction D-erythro-1-(imidazol-4-yl)glycerol 3-phosphate = 3-(imidazol-4-yl)-2-oxopropyl phosphate + H2O. It functions in the pathway amino-acid biosynthesis; L-histidine biosynthesis; L-histidine from 5-phospho-alpha-D-ribose 1-diphosphate: step 6/9. In Listeria welshimeri serovar 6b (strain ATCC 35897 / DSM 20650 / CCUG 15529 / CIP 8149 / NCTC 11857 / SLCC 5334 / V8), this protein is Imidazoleglycerol-phosphate dehydratase.